Consider the following 556-residue polypeptide: Adenine deaminase (556 aa).

Belongs to the metallo-dependent hydrolases superfamily. Adenine deaminase family. Mn(2+) is required as a cofactor.

The catalysed reaction is adenine + H2O + H(+) = hypoxanthine + NH4(+). The polypeptide is Adenine deaminase (Methanocaldococcus jannaschii (strain ATCC 43067 / DSM 2661 / JAL-1 / JCM 10045 / NBRC 100440) (Methanococcus jannaschii)).